The following is a 91-amino-acid chain: Acylphosphatase (91 aa).

The Acylphosphatase-like domain occupies 3-90 (RVLIRVKGKV…EIYLDFSITQ (88 aa)). Residues R18 and N36 contribute to the active site.

It belongs to the acylphosphatase family.

It carries out the reaction an acyl phosphate + H2O = a carboxylate + phosphate + H(+). In Shewanella amazonensis (strain ATCC BAA-1098 / SB2B), this protein is Acylphosphatase (acyP).